The chain runs to 115 residues: U3-lycotoxin-Ls1k (115 aa).

The signal sequence occupies residues 1 to 20; it reads MKFVLLFGVLLVALFSYSSA. The propeptide occupies 21-44; that stretch reads EMLDDFGQADEDELLSLIEKEEAR. 4 disulfides stabilise this stretch: Cys-48–Cys-63, Cys-55–Cys-72, Cys-62–Cys-87, and Cys-74–Cys-85.

It belongs to the neurotoxin 19 (CSTX) family. 01 subfamily. In terms of tissue distribution, expressed by the venom gland.

Its subcellular location is the secreted. The protein is U3-lycotoxin-Ls1k of Lycosa singoriensis (Wolf spider).